Here is a 463-residue protein sequence, read N- to C-terminus: Peptidylprolyl isomerase cyp7 (463 aa).

One can recognise a PPIase cyclophilin-type domain in the interval 11 to 166; it reads ATGTVILKTT…FPPKIISTEV (156 aa). Positions 224–275 are disordered; that stretch reads VKKPLRQKTPVSRSSDTTTELSKDLISSSSSIHSTYSSAQTGLTSAKVSSDE. A compositionally biased stretch (polar residues) spans 232–243; that stretch reads TPVSRSSDTTTE. Residues 250–261 show a composition bias toward low complexity; that stretch reads SSSSSIHSTYSS. The segment covering 262–271 has biased composition (polar residues); sequence AQTGLTSAKV.

This sequence belongs to the cyclophilin-type PPIase family. CWC27 subfamily. In terms of assembly, belongs to the 40S cdc5-associated complex (or cwf complex), a spliceosome sub-complex reminiscent of a late-stage spliceosome composed of the U2, U5 and U6 snRNAs and at least brr2, cdc5, cwf2/prp3, cwf3/syf1, cwf4/syf3, cwf5/ecm2, spp42/cwf6, cwf7/spf27, cwf8, cwf9, cwf10, cwf11, cwf12, prp45/cwf13, cwf14, cwf15, cwf16, cwf17, cwf18, cwf19, cwf20, cwf21, cwf22, cwf23, cwf24, cwf25, cwf26, cyp7/cwf27, cwf28, cwf29/ist3, lea1, msl1, prp5/cwf1, prp10, prp12/sap130, prp17, prp22, sap61, sap62, sap114, sap145, slu7, smb1, smd1, smd3, smf1, smg1 and syf2.

The protein localises to the cytoplasm. It is found in the nucleus. The enzyme catalyses [protein]-peptidylproline (omega=180) = [protein]-peptidylproline (omega=0). Its function is as follows. PPIases accelerate the folding of proteins. Catalyzes the cis-trans isomerization of proline imidic peptide bonds in oligopeptides. Involved in pre-mRNA splicing. This Schizosaccharomyces pombe (strain 972 / ATCC 24843) (Fission yeast) protein is Peptidylprolyl isomerase cyp7 (cyp7).